The sequence spans 161 residues: Type IV major fimbrial protein FimA (161 aa).

Positions 1-7 (MKSLQKG) are cleaved as a propeptide — leader sequence. Phe-8 is subject to N-methylphenylalanine. A helical transmembrane segment spans residues 8–28 (FTLIELMIVVAIIGILAAFAI). A disulfide bridge connects residues Cys-63 and Cys-105.

The protein belongs to the N-Me-Phe pilin family. In terms of assembly, the pili are polar flexible filaments of about 5.4 nanometers diameter and 2.5 micrometers average length; they consist of only a single polypeptide chain arranged in a helical configuration of five subunits per turn in the assembled pilus.

It is found in the fimbrium. The protein resides in the membrane. Major component of the type IV fimbriae that plays an essential role in twitching motility, natural transformation, and protease secretion. This chain is Type IV major fimbrial protein FimA (fimA), found in Dichelobacter nodosus (Bacteroides nodosus).